The primary structure comprises 219 residues: MNLSCSLVLLGGGKGERFNSLQPKQYTHLCGEPLILHALHAYQRLPFVQEVVVVCEEQYRELFLPYSVKFASPGTLRQDSVFSGLQQVSTPWVCIHDGVRPFVYADEVIEVCSAARKTGAAALASPATYTIKSCAPVRTLDRDALAVIHTPQCLDTEVLREGLLLARAMDFSLSDDTEAAELLGIEPTLVFSNRVQIKVTYPEDLLFAETLLSKSSTYK.

It belongs to the IspD/TarI cytidylyltransferase family. IspD subfamily.

It catalyses the reaction 2-C-methyl-D-erythritol 4-phosphate + CTP + H(+) = 4-CDP-2-C-methyl-D-erythritol + diphosphate. It functions in the pathway isoprenoid biosynthesis; isopentenyl diphosphate biosynthesis via DXP pathway; isopentenyl diphosphate from 1-deoxy-D-xylulose 5-phosphate: step 2/6. Catalyzes the formation of 4-diphosphocytidyl-2-C-methyl-D-erythritol from CTP and 2-C-methyl-D-erythritol 4-phosphate (MEP). The polypeptide is 2-C-methyl-D-erythritol 4-phosphate cytidylyltransferase (Chlamydia trachomatis serovar D (strain ATCC VR-885 / DSM 19411 / UW-3/Cx)).